An 851-amino-acid polypeptide reads, in one-letter code: Putative serine/threonine-protein kinase 019R (851 aa).

Disordered regions lie at residues 1–24 (MATNYCDEFERNPTRNPRTGRTIK), 61–91 (PRVAAASPCPEFARDPTRNPRTGRPIKRGGP), 104–160 (GGAS…KRGG), 190–216 (GLSPFRSHMRKSPARRSPARRSPARRS), and 340–400 (SRPS…GEPR). The segment covering 125–141 (ARRQSPAEAAEASPCPE) has biased composition (low complexity). Positions 196–216 (SHMRKSPARRSPARRSPARRS) are enriched in basic residues. A compositionally biased stretch (low complexity) spans 340-366 (SRPSGVSRTSGTSGSSGSSASSRPPNS). Residues 456-851 (AVSDNVIGQG…GEREIESFTM (396 aa)) form the Protein kinase domain. ATP-binding positions include 462 to 470 (IGQGSWGSV) and lysine 485. The Proton acceptor role is filled by aspartate 608.

The protein belongs to the protein kinase superfamily. Ser/Thr protein kinase family.

The enzyme catalyses L-seryl-[protein] + ATP = O-phospho-L-seryl-[protein] + ADP + H(+). The catalysed reaction is L-threonyl-[protein] + ATP = O-phospho-L-threonyl-[protein] + ADP + H(+). The polypeptide is Putative serine/threonine-protein kinase 019R (Dryophytes versicolor (chameleon treefrog)).